We begin with the raw amino-acid sequence, 63 residues long: MIVVPVKEGENIERALKRFKRKFEKTGAVRELRARQAFEKPSVAKRKKMQKAIYVKQLQVAEE.

Belongs to the bacterial ribosomal protein bS21 family.

The polypeptide is Small ribosomal subunit protein bS21 (Porphyromonas gingivalis (strain ATCC BAA-308 / W83)).